Reading from the N-terminus, the 170-residue chain is dCTP pyrophosphatase 1 (170 aa).

Residues 1–25 are disordered; sequence MSTAGDGERGTVGQEDSAAARPFRF. Position 2 is an N-acetylserine (serine 2). Phosphoserine is present on serine 2. Residues histidine 38 and 47–51 each bind substrate; that span reads WEQFH. Residues glutamate 63 and glutamate 66 each coordinate Mg(2+). Tryptophan 73 is a substrate binding site. Mg(2+) contacts are provided by glutamate 95 and aspartate 98. A substrate-binding site is contributed by tyrosine 102. The segment at 150–170 is disordered; it reads SENQAVGAGDPASELRDQAST.

Homotetramer. Mg(2+) serves as cofactor. As to expression, ubiquitous. Highly expressed in heart, liver, skeletal muscle, cerebellum, brain, and salivary gland.

The protein localises to the cytoplasm. Its subcellular location is the cytosol. It carries out the reaction dCTP + H2O = dCMP + diphosphate + H(+). With respect to regulation, inhibited by divalent calcium or cadmium ions. In terms of biological role, hydrolyzes deoxynucleoside triphosphates (dNTPs) to the corresponding nucleoside monophosphates. Has a strong preference for dCTP and its analogs including 5-iodo-dCTP and 5-methyl-dCTP for which it may even have a higher efficiency. May protect DNA or RNA against the incorporation of these genotoxic nucleotide analogs through their catabolism. In Mus musculus (Mouse), this protein is dCTP pyrophosphatase 1.